A 142-amino-acid chain; its full sequence is Acidic phospholipase A2 Bc-PL (142 aa).

The signal sequence occupies residues 1–9 (AVCVSLLGA). Residues 10 to 17 (ANIPPQPL) constitute a propeptide that is removed on maturation. Intrachain disulfides connect Cys28–Cys94, Cys44–Cys141, Cys46–Cys62, Cys61–Cys122, Cys68–Cys115, Cys78–Cys108, and Cys101–Cys113. Residues Tyr45, Gly47, and Gly49 each contribute to the Ca(2+) site. Residue His65 is part of the active site. Asp66 contacts Ca(2+). Asp116 is a catalytic residue.

This sequence belongs to the phospholipase A2 family. Group I subfamily. D49 sub-subfamily. Requires Ca(2+) as cofactor. As to expression, expressed by the venom gland.

The protein localises to the secreted. The catalysed reaction is a 1,2-diacyl-sn-glycero-3-phosphocholine + H2O = a 1-acyl-sn-glycero-3-phosphocholine + a fatty acid + H(+). Its function is as follows. PLA2 catalyzes the calcium-dependent hydrolysis of the 2-acyl groups in 3-sn-phosphoglycerides. The chain is Acidic phospholipase A2 Bc-PL from Bungarus candidus (Malayan krait).